The sequence spans 117 residues: DNA-directed RNA polymerase II subunit RPB11 (117 aa).

The protein belongs to the archaeal Rpo11/eukaryotic RPB11/RPC19 RNA polymerase subunit family. In terms of assembly, component of the RNA polymerase II (Pol II) complex consisting of 12 subunits.

It localises to the nucleus. Functionally, DNA-dependent RNA polymerase catalyzes the transcription of DNA into RNA using the four ribonucleoside triphosphates as substrates. Component of RNA polymerase II which synthesizes mRNA precursors and many functional non-coding RNAs. Pol II is the central component of the basal RNA polymerase II transcription machinery. It is composed of mobile elements that move relative to each other. RPB11 is part of the core element with the central large cleft. In Drosophila melanogaster (Fruit fly), this protein is DNA-directed RNA polymerase II subunit RPB11.